We begin with the raw amino-acid sequence, 97 residues long: U-scoloptoxin(10)-Ssd2a (97 aa).

A signal peptide spans 1–23 (MNKSMLIFFTILFLTYIIEEKEA).

Post-translationally, contains 3 disulfide bonds. In terms of tissue distribution, expressed by the venom gland.

The protein localises to the secreted. In Scolopendra dehaani (Thai centipede), this protein is U-scoloptoxin(10)-Ssd2a.